A 422-amino-acid polypeptide reads, in one-letter code: Aliphatic (R)-hydroxynitrile lyase (422 aa).

Zn(2+) is bound by residues cysteine 63, histidine 85, cysteine 115, cysteine 118, cysteine 121, cysteine 129, and cysteine 199.

The protein belongs to the zinc-containing alcohol dehydrogenase family. As to quaternary structure, homodimer. Zn(2+) is required as a cofactor.

The enzyme catalyses (2R)-2-hydroxy-2-methylbutanenitrile = butan-2-one + hydrogen cyanide. Involved in the catabolism of cyanogenic glycosides. Naturally occurring substrates are the aliphatic acetone cyanohydrin and butan-2-one cyanohydrin, which are the aglycones of the cyanogenic glycosides linamarin, lotaustralin, linustatin and neolinustatin. Can use various aliphatic ketones and aldehydes as substrates, but not aromatic ketones. This Linum usitatissimum (Flax) protein is Aliphatic (R)-hydroxynitrile lyase.